The following is a 61-amino-acid chain: MIYITIFMILPCPVPCSHVFLYVFYIFLFLVLFIMTIYQSSQKLHFSNCYHNNQHHNSLHN.

The chain crosses the membrane as a helical span at residues 18–38 (HVFLYVFYIFLFLVLFIMTIY).

It localises to the cell inner membrane. This Escherichia coli (strain K12) protein is Protein YncO.